The following is a 179-amino-acid chain: M-zodatoxin-Lt4b (179 aa).

Residues 1–22 (MKFSIIALALAVAFVCVAESRS) form the signal peptide. Positions 23–43 (EEEGYDVSEEIQAEELEEAAR) are excised as a propeptide. A Processing quadruplet motif 1 motif is present at residues 40–43 (EAAR). Residue glutamine 61 is modified to Glutamine amide. Residues 63–66 (REDS) carry the Inverted processing quadruplet motif 1 motif. A propeptide spanning residues 63-71 (REDSEDAGR) is cleaved from the precursor. The Processing quadruplet motif 2 motif lies at 68–71 (DAGR). Position 89 is a glutamine amide (glutamine 89). An Inverted processing quadruplet motif 2 motif is present at residues 91–94 (REDT). A propeptide spanning residues 91 to 99 (REDTEEAGR) is cleaved from the precursor. The Processing quadruplet motif 3 motif lies at 96–99 (EAGR). At glutamine 117 the chain carries Glutamine amide. An Inverted processing quadruplet motif 3 motif is present at residues 119–122 (REDS). Positions 119–127 (REDSEEAGR) are excised as a propeptide. The Processing quadruplet motif 4 signature appears at 124–127 (EAGR). Glutamine 145 carries the glutamine amide modification. Positions 147–150 (REDT) match the Inverted processing quadruplet motif 4 motif. Residues 147–154 (REDTEEAR) constitute a propeptide that is removed on maturation. The short motif at 151 to 154 (EEAR) is the Processing quadruplet motif 5 element. The residue at position 178 (phenylalanine 178) is a Phenylalanine amide.

It belongs to the cationic peptide 03 (latarcin) family. 04 subfamily. In terms of processing, cleavage of the propeptide depends on the processing quadruplet motif (PQM) (XXXR, with at least one of X being E) and the inverted PQM (RXXX, with at least one of X being E). Expressed by the venom gland.

The protein localises to the secreted. Functionally, M-zodatoxin-Lt4b: Has antimicrobial activity against Gram-positive bacteria (A.globiformis VKM Ac-1112 (MIC=0.3 uM), and B.subtilis VKM B-501 (MIC=1.1 uM)), Gram-negative bacteria (E.coli DH5-alpha (MIC=4.4 uM), E.coli MH1 (MIC=4.4 uM), and P.aeruginosa PAO1 (MIC=&gt;35 uM)), and yeasts (P.pastoris GS115 (MIC=&gt;35 uM), and S.cerevisiae Y190 (MIC=35 uM)). Does not have hemolytic activity against rabbit erythrocytes. Causes paralysis, but is not lethal when injected into insect (M.domestica) larvae. In terms of biological role, shows no antimicrobial activity against Gram-positive bacterium B.subtilis B-501 or Gram-negative bacterium E.coli DH5-alpha at concentration up to 20 uM. In Lachesana tarabaevi (Spider), this protein is M-zodatoxin-Lt4b.